A 98-amino-acid chain; its full sequence is HssA/B-like protein 36 (98 aa).

Residues 1 to 29 (MTLFSSISSISNPMTSSKSSISSFGSGTS) form a disordered region.

Belongs to the hssA/B family.

This is HssA/B-like protein 36 (hssl36) from Dictyostelium discoideum (Social amoeba).